The sequence spans 84 residues: UPF0153 protein PA1578.1 (84 aa).

Belongs to the UPF0153 family.

The chain is UPF0153 protein PA1578.1 from Pseudomonas aeruginosa (strain ATCC 15692 / DSM 22644 / CIP 104116 / JCM 14847 / LMG 12228 / 1C / PRS 101 / PAO1).